A 197-amino-acid chain; its full sequence is Recombination protein RecR (197 aa).

A C4-type zinc finger spans residues 56 to 71; sequence CKRCGSYAETEICNIC. Residues 79 to 174 enclose the Toprim domain; sequence HTFCVVEQPE…DVTRIAYGIT (96 aa).

This sequence belongs to the RecR family.

Its function is as follows. May play a role in DNA repair. It seems to be involved in an RecBC-independent recombinational process of DNA repair. It may act with RecF and RecO. The chain is Recombination protein RecR from Leptospira borgpetersenii serovar Hardjo-bovis (strain JB197).